Consider the following 682-residue polypeptide: Glucan endo-1,3-beta-glucosidase A1 (682 aa).

A signal peptide spans 1–38 (MKPSHFTEKRFMKKVLGLFLVVVMLASVGVLPTSKVQA). Residues 391-682 (YTFIGNPNAP…VDYVRVYKEQ (292 aa)) form the GH16 domain. Glu-552 (nucleophile) is an active-site residue. The active-site Proton donor is Glu-557.

Belongs to the glycosyl hydrolase 16 family.

Its subcellular location is the secreted. The enzyme catalyses Hydrolysis of (1-&gt;3)-beta-D-glucosidic linkages in (1-&gt;3)-beta-D-glucans.. Lysis of cellular walls containing beta-1,3-glucans. Implicated in the defense against fungal pathogens. This Niallia circulans (Bacillus circulans) protein is Glucan endo-1,3-beta-glucosidase A1 (glcA).